The chain runs to 886 residues: Alanine--tRNA ligase (886 aa).

Zn(2+) contacts are provided by His568, His572, Cys670, and His674.

The protein belongs to the class-II aminoacyl-tRNA synthetase family. Requires Zn(2+) as cofactor.

It localises to the cytoplasm. The catalysed reaction is tRNA(Ala) + L-alanine + ATP = L-alanyl-tRNA(Ala) + AMP + diphosphate. Catalyzes the attachment of alanine to tRNA(Ala) in a two-step reaction: alanine is first activated by ATP to form Ala-AMP and then transferred to the acceptor end of tRNA(Ala). Also edits incorrectly charged Ser-tRNA(Ala) and Gly-tRNA(Ala) via its editing domain. The chain is Alanine--tRNA ligase from Prochlorococcus marinus (strain NATL2A).